We begin with the raw amino-acid sequence, 640 residues long: Insulin-like growth factor 1 receptor (640 aa).

Fibronectin type-III domains lie at 5–101 (VPRP…TMPA) and 107–200 (IPGP…VQAK). Residues 14–208 (EVMQIANTTM…AKTTYENFIH (195 aa)) are Extracellular-facing. N-linked (GlcNAc...) asparagine glycosylation is found at N20, N29, N37, N173, and N186. The helical transmembrane segment at 209 to 232 (LMIALPIAVLLIVGGLVIMLYVFH) threads the bilayer. The Cytoplasmic segment spans residues 233–640 (RKRNSSRLGN…ALPLPQSSTC (408 aa)). The short motif at 250–253 (NPEY) is the IRS1- and SHC1-binding element. Y253 is modified (phosphotyrosine). The Protein kinase domain maps to 272-547 (ITMSRELGQG…SVKDEMEAGF (276 aa)). ATP is bound by residues 278-286 (LGQGSFGMV) and K306. D408 (proton acceptor) is an active-site residue. 3 positions are modified to phosphotyrosine; by autocatalysis: Y434, Y438, and Y439. Residues K441 and K444 each participate in a glycyl lysine isopeptide (Lys-Gly) (interchain with G-Cter in ubiquitin) cross-link. Position 551 is a phosphoserine; by GSK3-beta (S551). S555 is modified (phosphoserine). Positions 555-640 (SEENKPPEPE…ALPLPQSSTC (86 aa)) are disordered. Acidic residues predominate over residues 563–572 (PEELDLEPEN). The segment covering 573 to 589 (MESVPLDPSASSASLPL) has biased composition (low complexity). Residues 590–599 (PDRHSGHKAE) are compositionally biased toward basic and acidic residues.

Belongs to the protein kinase superfamily. Tyr protein kinase family. Insulin receptor subfamily. In terms of assembly, tetramer of 2 alpha and 2 beta chains linked by disulfide bonds. The alpha chains contribute to the formation of the ligand-binding domain, while the beta chain carries the kinase domain. Interacts with PIK3R1 and with the PTB/PID domains of IRS1 and SHC1 in vitro when autophosphorylated on tyrosine residues. Forms a hybrid receptor with INSR, the hybrid is a tetramer consisting of 1 alpha chain and 1 beta chain of INSR and 1 alpha chain and 1 beta chain of IGF1R. Interacts with ARRB1 and ARRB2. Interacts with GRB10. Interacts with RACK1. Interacts with SOCS1, SOCS2 and SOCS3. Interacts with 14-3-3 proteins. Interacts with NMD2. Interacts with MAP3K5. Interacts with STAT3. Interacts (nascent precursor form) with ZFAND2B. Autophosphorylated on tyrosine residues in response to ligand binding. Autophosphorylation occurs in trans, i.e. one subunit of the dimeric receptor phosphorylates tyrosine residues on the other subunit. Autophosphorylation occurs in a sequential manner; Tyr-438 is predominantly phosphorylated first, followed by phosphorylation of Tyr-434 and Tyr-439. While every single phosphorylation increases kinase activity, all three tyrosine residues in the kinase activation loop (Tyr-438, Tyr-434 and Tyr-439) have to be phosphorylated for optimal activity. Can be autophosphorylated at additional tyrosine residues (in vitro). Autophosphorylated is followed by phosphorylation of juxtamembrane tyrosines and C-terminal serines. May also be phosphorylated at Tyr-434 and Tyr-439 by mTORC2. Phosphorylation of Tyr-253 is required for IRS1- and SHC1-binding. Phosphorylation of Ser-551 by GSK-3beta restrains kinase activity and promotes cell surface expression, it requires a priming phosphorylation at Ser-555. Dephosphorylated by PTPN1. In terms of processing, polyubiquitinated at Lys-441 and Lys-444 through both 'Lys-48' and 'Lys-29' linkages, promoting receptor endocytosis and subsequent degradation by the proteasome. Ubiquitination is facilitated by pre-existing phosphorylation. Post-translationally, sumoylated with SUMO1. Controlled by regulated intramembrane proteolysis (RIP). Undergoes metalloprotease-dependent constitutive ectodomain shedding to produce a membrane-anchored 52 kDa C-Terminal fragment which is further processed by presenilin gamma-secretase to yield an intracellular 50 kDa fragment.

The protein resides in the cell membrane. The catalysed reaction is L-tyrosyl-[protein] + ATP = O-phospho-L-tyrosyl-[protein] + ADP + H(+). Its activity is regulated as follows. Activated by autophosphorylation at Tyr-434, Tyr-438 and Tyr-439 on the kinase activation loop; phosphorylation at all three tyrosine residues is required for optimal kinase activity. Inhibited by MSC1609119A-1, BMS-754807, PQIP, benzimidazole pyridinone, isoquinolinedione, bis-azaindole, 3-cyanoquinoline, 2,4-bis-arylamino-1,3-pyrimidine, pyrrolopyrimidine, pyrrole-5-carboxaldehyde, picropodophyllin (PPP), tyrphostin derivatives. While most inhibitors bind to the ATP binding pocket, MSC1609119A-1 functions as allosteric inhibitor and binds close to the DFG motif and the activation loop. Functionally, receptor tyrosine kinase which mediates actions of insulin-like growth factor 1 (IGF1). Binds IGF1 with high affinity and IGF2 and insulin (INS) with a lower affinity. The activated IGF1R is involved in cell growth and survival control. IGF1R is crucial for tumor transformation and survival of malignant cell. Ligand binding activates the receptor kinase, leading to receptor autophosphorylation, and tyrosines phosphorylation of multiple substrates, that function as signaling adapter proteins including, the insulin-receptor substrates (IRS1/2), Shc and 14-3-3 proteins. Phosphorylation of IRSs proteins lead to the activation of two main signaling pathways: the PI3K-AKT/PKB pathway and the Ras-MAPK pathway. The result of activating the MAPK pathway is increased cellular proliferation, whereas activating the PI3K pathway inhibits apoptosis and stimulates protein synthesis. Phosphorylated IRS1 can activate the 85 kDa regulatory subunit of PI3K (PIK3R1), leading to activation of several downstream substrates, including protein AKT/PKB. AKT phosphorylation, in turn, enhances protein synthesis through mTOR activation and triggers the antiapoptotic effects of IGFIR through phosphorylation and inactivation of BAD. In parallel to PI3K-driven signaling, recruitment of Grb2/SOS by phosphorylated IRS1 or Shc leads to recruitment of Ras and activation of the ras-MAPK pathway. In addition to these two main signaling pathways IGF1R signals also through the Janus kinase/signal transducer and activator of transcription pathway (JAK/STAT). Phosphorylation of JAK proteins can lead to phosphorylation/activation of signal transducers and activators of transcription (STAT) proteins. In particular activation of STAT3, may be essential for the transforming activity of IGF1R. The JAK/STAT pathway activates gene transcription and may be responsible for the transforming activity. JNK kinases can also be activated by the IGF1R. IGF1 exerts inhibiting activities on JNK activation via phosphorylation and inhibition of MAP3K5/ASK1, which is able to directly associate with the IGF1R. When present in a hybrid receptor with INSR, binds IGF1. This is Insulin-like growth factor 1 receptor (IGF1R) from Bos taurus (Bovine).